We begin with the raw amino-acid sequence, 344 residues long: Phenylalanine--tRNA ligase alpha subunit (344 aa).

E256 contributes to the Mg(2+) binding site.

The protein belongs to the class-II aminoacyl-tRNA synthetase family. Phe-tRNA synthetase alpha subunit type 1 subfamily. As to quaternary structure, tetramer of two alpha and two beta subunits. Requires Mg(2+) as cofactor.

It is found in the cytoplasm. The catalysed reaction is tRNA(Phe) + L-phenylalanine + ATP = L-phenylalanyl-tRNA(Phe) + AMP + diphosphate + H(+). The protein is Phenylalanine--tRNA ligase alpha subunit of Bacillus licheniformis (strain ATCC 14580 / DSM 13 / JCM 2505 / CCUG 7422 / NBRC 12200 / NCIMB 9375 / NCTC 10341 / NRRL NRS-1264 / Gibson 46).